Reading from the N-terminus, the 444-residue chain is Deoxyguanosinetriphosphate triphosphohydrolase-like protein (444 aa).

Residues 1–28 form a disordered region; it reads MTDAVWNERRLGEDKQRRNDHRSPYQRD. An HD domain is found at 59-250; the sequence is RLTHSLEVSQ…MELADDIAYA (192 aa).

Belongs to the dGTPase family. Type 2 subfamily.

The polypeptide is Deoxyguanosinetriphosphate triphosphohydrolase-like protein (Shewanella pealeana (strain ATCC 700345 / ANG-SQ1)).